Here is a 394-residue protein sequence, read N- to C-terminus: Elongation factor Tu (394 aa).

The tr-type G domain maps to 10–204 (KPHVNVGTIG…ALDNYIPEPE (195 aa)). Residues 19-26 (GHVDHGKT) are G1. 19-26 (GHVDHGKT) contacts GTP. Position 26 (threonine 26) interacts with Mg(2+). Residues 60 to 64 (GITIS) are G2. A G3 region spans residues 81–84 (DCPG). GTP is bound by residues 81–85 (DCPGH) and 136–139 (NKCD). The tract at residues 136-139 (NKCD) is G4. Residues 174–176 (SAL) are G5.

It belongs to the TRAFAC class translation factor GTPase superfamily. Classic translation factor GTPase family. EF-Tu/EF-1A subfamily. Monomer.

Its subcellular location is the cytoplasm. The catalysed reaction is GTP + H2O = GDP + phosphate + H(+). Functionally, GTP hydrolase that promotes the GTP-dependent binding of aminoacyl-tRNA to the A-site of ribosomes during protein biosynthesis. The chain is Elongation factor Tu from Idiomarina loihiensis (strain ATCC BAA-735 / DSM 15497 / L2-TR).